A 309-amino-acid polypeptide reads, in one-letter code: Cilia-and flagella-associated protein 96 (309 aa).

Residues 220–249 (EEKKKTISNTFKPSSPGKKPGGMKAGTFDP) form a disordered region.

This sequence belongs to the CFAP96 family. In terms of tissue distribution, detected in testis and fetal liver.

The protein resides in the cytoplasm. It localises to the cytoskeleton. It is found in the microtubule organizing center. The protein localises to the centrosome. This chain is Cilia-and flagella-associated protein 96, found in Homo sapiens (Human).